We begin with the raw amino-acid sequence, 20 residues long: Hemocyanin subunit 6 (20 aa).

The protein belongs to the tyrosinase family. Hemocyanin subfamily. As to expression, hemolymph.

The protein localises to the secreted. The protein resides in the extracellular space. In terms of biological role, hemocyanins are copper-containing oxygen carriers occurring freely dissolved in the hemolymph of many mollusks and arthropods. This chain is Hemocyanin subunit 6, found in Homarus americanus (American lobster).